A 200-amino-acid chain; its full sequence is ATP-dependent Clp protease proteolytic subunit 1 (200 aa).

Catalysis depends on Ser102, which acts as the Nucleophile. His127 is an active-site residue.

Belongs to the peptidase S14 family. In terms of assembly, fourteen ClpP subunits assemble into 2 heptameric rings which stack back to back to give a disk-like structure with a central cavity, resembling the structure of eukaryotic proteasomes.

It localises to the cytoplasm. It carries out the reaction Hydrolysis of proteins to small peptides in the presence of ATP and magnesium. alpha-casein is the usual test substrate. In the absence of ATP, only oligopeptides shorter than five residues are hydrolyzed (such as succinyl-Leu-Tyr-|-NHMec, and Leu-Tyr-Leu-|-Tyr-Trp, in which cleavage of the -Tyr-|-Leu- and -Tyr-|-Trp bonds also occurs).. Its function is as follows. Cleaves peptides in various proteins in a process that requires ATP hydrolysis. Has a chymotrypsin-like activity. Plays a major role in the degradation of misfolded proteins. This chain is ATP-dependent Clp protease proteolytic subunit 1, found in Bradyrhizobium diazoefficiens (strain JCM 10833 / BCRC 13528 / IAM 13628 / NBRC 14792 / USDA 110).